Reading from the N-terminus, the 229-residue chain is Extracellular small neutral protease (229 aa).

The signal sequence occupies residues methionine 1–alanine 28. Positions threonine 29 to threonine 81 are excised as a propeptide. Residues aspartate 159 and threonine 161 each contribute to the Ca(2+) site. Residue histidine 166 coordinates Zn(2+). Glutamate 167 is an active-site residue. Zn(2+) contacts are provided by histidine 170 and aspartate 176. A disulfide bond links cysteine 182 and cysteine 195.

The protein belongs to the peptidase M7 family. As to quaternary structure, monomer. Ca(2+) serves as cofactor. The cofactor is Zn(2+).

It localises to the secreted. The catalysed reaction is Hydrolyzes proteins with a preference for Tyr or Phe in the P1' position. Has no action on amino-acid p-nitroanilides.. Functionally, milk hydrolyzing. In Streptomyces sp. (strain C5), this protein is Extracellular small neutral protease (snpA).